The primary structure comprises 256 residues: Thiazole synthase (256 aa).

Lysine 96 acts as the Schiff-base intermediate with DXP in catalysis. Residues glycine 157, 183-184 (AG), and 205-206 (NT) contribute to the 1-deoxy-D-xylulose 5-phosphate site.

Belongs to the ThiG family. Homotetramer. Forms heterodimers with either ThiH or ThiS.

It localises to the cytoplasm. It catalyses the reaction [ThiS sulfur-carrier protein]-C-terminal-Gly-aminoethanethioate + 2-iminoacetate + 1-deoxy-D-xylulose 5-phosphate = [ThiS sulfur-carrier protein]-C-terminal Gly-Gly + 2-[(2R,5Z)-2-carboxy-4-methylthiazol-5(2H)-ylidene]ethyl phosphate + 2 H2O + H(+). It participates in cofactor biosynthesis; thiamine diphosphate biosynthesis. Catalyzes the rearrangement of 1-deoxy-D-xylulose 5-phosphate (DXP) to produce the thiazole phosphate moiety of thiamine. Sulfur is provided by the thiocarboxylate moiety of the carrier protein ThiS. In vitro, sulfur can be provided by H(2)S. The protein is Thiazole synthase of Bacillus anthracis.